A 46-amino-acid polypeptide reads, in one-letter code: Escargot/snail protein homolog (46 aa).

3 C2H2-type zinc fingers span residues 1–4 (HIAH), 9–30 (CKCP…IRTH), and 36–46 (SVCQHCNRAFA).

The protein belongs to the snail C2H2-type zinc-finger protein family.

It is found in the nucleus. The sequence is that of Escargot/snail protein homolog from Lithobius forficatus (Centipede).